A 183-amino-acid polypeptide reads, in one-letter code: Archaemetzincin (183 aa).

A Zn(2+)-binding site is contributed by His-132. Residue Glu-133 is the Proton acceptor of the active site. Zn(2+) contacts are provided by His-136, His-142, Cys-143, Cys-148, Cys-167, and Cys-170.

It belongs to the peptidase M54 family. As to quaternary structure, monomer. Zn(2+) is required as a cofactor.

In terms of biological role, probable zinc metalloprotease whose natural substrate is unknown. The chain is Archaemetzincin from Aeropyrum pernix (strain ATCC 700893 / DSM 11879 / JCM 9820 / NBRC 100138 / K1).